A 72-amino-acid polypeptide reads, in one-letter code: Translation initiation factor IF-1 (72 aa).

The 72-residue stretch at 1–72 (MSKQDVIEFD…TKGRITYRGK (72 aa)) folds into the S1-like domain.

This sequence belongs to the IF-1 family. Component of the 30S ribosomal translation pre-initiation complex which assembles on the 30S ribosome in the order IF-2 and IF-3, IF-1 and N-formylmethionyl-tRNA(fMet); mRNA recruitment can occur at any time during PIC assembly.

The protein localises to the cytoplasm. In terms of biological role, one of the essential components for the initiation of protein synthesis. Stabilizes the binding of IF-2 and IF-3 on the 30S subunit to which N-formylmethionyl-tRNA(fMet) subsequently binds. Helps modulate mRNA selection, yielding the 30S pre-initiation complex (PIC). Upon addition of the 50S ribosomal subunit IF-1, IF-2 and IF-3 are released leaving the mature 70S translation initiation complex. The sequence is that of Translation initiation factor IF-1 from Hydrogenovibrio crunogenus (strain DSM 25203 / XCL-2) (Thiomicrospira crunogena).